The chain runs to 712 residues: Polyribonucleotide nucleotidyltransferase (712 aa).

2 residues coordinate Mg(2+): Asp487 and Asp493. Residues 554-613 (PKIITMTINPDKIRDVIGPSGKQINKIIEETGVKIDIEQDGTVFISSINQEMNDKAKKII) enclose the KH domain. The region spanning 623-691 (GEIYEGKVKR…KQGRVNLSRK (69 aa)) is the S1 motif domain.

It belongs to the polyribonucleotide nucleotidyltransferase family. Requires Mg(2+) as cofactor.

Its subcellular location is the cytoplasm. The catalysed reaction is RNA(n+1) + phosphate = RNA(n) + a ribonucleoside 5'-diphosphate. Its function is as follows. Involved in mRNA degradation. Catalyzes the phosphorolysis of single-stranded polyribonucleotides processively in the 3'- to 5'-direction. The sequence is that of Polyribonucleotide nucleotidyltransferase from Bacillus cereus (strain ATCC 10987 / NRS 248).